Reading from the N-terminus, the 155-residue chain is RNA pyrophosphohydrolase (155 aa).

The 145-residue stretch at E5–S149 folds into the Nudix hydrolase domain. The Nudix box signature appears at G39–G60.

Belongs to the Nudix hydrolase family. RppH subfamily. Requires a divalent metal cation as cofactor.

In terms of biological role, accelerates the degradation of transcripts by removing pyrophosphate from the 5'-end of triphosphorylated RNA, leading to a more labile monophosphorylated state that can stimulate subsequent ribonuclease cleavage. This Zymomonas mobilis subsp. mobilis (strain ATCC 31821 / ZM4 / CP4) protein is RNA pyrophosphohydrolase.